The primary structure comprises 245 residues: PF03932 family protein CutC (245 aa).

This sequence belongs to the CutC family.

It localises to the cytoplasm. The chain is PF03932 family protein CutC from Photobacterium profundum (strain SS9).